The chain runs to 267 residues: Multivesicular body subunit 12A (267 aa).

In terms of domain architecture, MABP spans 7 to 146; sequence AAPLSGVGWA…SFAIWCKKGA (140 aa). An SH3-binding motif is present at residues 154 to 159; sequence PVPKPR. Positions 210-259 constitute a UMA domain; it reads MDGVPFTLHPKFERSPKSDSSAILTDLTVKSLADIEKEYNYTFVVERTAA.

The protein belongs to the MVB12 family. As to quaternary structure, component of the ESCRT-I complex (endosomal sorting complex required for transport I).

Its subcellular location is the cytoplasm. It localises to the endosome. It is found in the late endosome membrane. In terms of biological role, component of the ESCRT-I complex, a regulator of vesicular trafficking process. Required for the sorting of endocytic ubiquitinated cargos into multivesicular bodies. The sequence is that of Multivesicular body subunit 12A (MVB12A) from Gallus gallus (Chicken).